The chain runs to 39 residues: Photosystem II reaction center protein J (39 aa).

The helical transmembrane segment at 7-27 (IPLWIVAVVVGLGVVTVVGLF) threads the bilayer.

Belongs to the PsbJ family. PSII is composed of 1 copy each of membrane proteins PsbA, PsbB, PsbC, PsbD, PsbE, PsbF, PsbH, PsbI, PsbJ, PsbK, PsbL, PsbM, PsbT, PsbX, PsbY, PsbZ, Psb30/Ycf12, peripheral proteins PsbO, CyanoQ (PsbQ), PsbU, PsbV and a large number of cofactors. It forms dimeric complexes.

It localises to the cellular thylakoid membrane. One of the components of the core complex of photosystem II (PSII). PSII is a light-driven water:plastoquinone oxidoreductase that uses light energy to abstract electrons from H(2)O, generating O(2) and a proton gradient subsequently used for ATP formation. It consists of a core antenna complex that captures photons, and an electron transfer chain that converts photonic excitation into a charge separation. This chain is Photosystem II reaction center protein J, found in Synechococcus sp. (strain JA-3-3Ab) (Cyanobacteria bacterium Yellowstone A-Prime).